We begin with the raw amino-acid sequence, 334 residues long: DnaJ protein homolog 1 (334 aa).

Residues 4-68 (DFYKILGLER…KKRDIFDNYG (65 aa)) enclose the J domain. At Ser-187 the chain carries Phosphoserine.

It localises to the cytoplasm. This Drosophila melanogaster (Fruit fly) protein is DnaJ protein homolog 1 (DnaJ-1).